The sequence spans 446 residues: Methylenetetrahydrofolate--tRNA-(uracil-5-)-methyltransferase TrmFO (446 aa).

11–16 (GGGLAG) serves as a coordination point for FAD.

It belongs to the MnmG family. TrmFO subfamily. Requires FAD as cofactor.

It is found in the cytoplasm. It catalyses the reaction uridine(54) in tRNA + (6R)-5,10-methylene-5,6,7,8-tetrahydrofolate + NADH + H(+) = 5-methyluridine(54) in tRNA + (6S)-5,6,7,8-tetrahydrofolate + NAD(+). The enzyme catalyses uridine(54) in tRNA + (6R)-5,10-methylene-5,6,7,8-tetrahydrofolate + NADPH + H(+) = 5-methyluridine(54) in tRNA + (6S)-5,6,7,8-tetrahydrofolate + NADP(+). In terms of biological role, catalyzes the folate-dependent formation of 5-methyl-uridine at position 54 (M-5-U54) in all tRNAs. This is Methylenetetrahydrofolate--tRNA-(uracil-5-)-methyltransferase TrmFO from Oleidesulfovibrio alaskensis (strain ATCC BAA-1058 / DSM 17464 / G20) (Desulfovibrio alaskensis).